Consider the following 1816-residue polypeptide: Laminin subunit alpha-4 (1816 aa).

Residues 1–24 (MGWSTAWCSVLALWLLWCAVCSNA) form the signal peptide. Serine 39 carries O-linked (Xyl...) (chondroitin sulfate) serine glycosylation. Intrachain disulfides connect cysteine 82–cysteine 91, cysteine 84–cysteine 98, cysteine 101–cysteine 110, cysteine 113–cysteine 129, cysteine 132–cysteine 146, cysteine 134–cysteine 155, cysteine 157–cysteine 166, cysteine 169–cysteine 184, cysteine 187–cysteine 202, cysteine 189–cysteine 209, cysteine 212–cysteine 221, and cysteine 224–cysteine 238. Laminin EGF-like domains are found at residues 82–131 (CDCN…FCQP), 132–186 (CPCP…TCKK), and 187–240 (CDCS…NCAV). N-linked (GlcNAc...) asparagine glycosylation is present at asparagine 104. Asparagine 215 is a glycosylation site (N-linked (GlcNAc...) asparagine). Positions 241 to 255 (CNCGGGPCDSVTGEC) constitute a Laminin EGF-like 4; truncated domain. The interval 256–825 (LEEGFEVPTG…AQTRSVASKI (570 aa)) is domain II and I. Asparagine 308, asparagine 333, asparagine 458, asparagine 550, asparagine 571, asparagine 574, asparagine 631, and asparagine 639 each carry an N-linked (GlcNAc...) asparagine glycan. A coiled-coil region spans residues 431–523 (THRELVDEEA…ERVKEQMEVV (93 aa)). Positions 556-604 (AEIDGAKNELQGKLSNLSNLSHDLVQEATDHAYNLQQEADELSRNLHSS) form a coiled coil. Residues 655–717 (IIYHKDESDN…AVKQLQAAER (63 aa)) adopt a coiled-coil conformation. The short motif at 717–719 (RGD) is the Cell attachment site element. N-linked (GlcNAc...) asparagine glycosylation is found at asparagine 735, asparagine 751, asparagine 754, asparagine 780, and asparagine 803. Residues 770-799 (AVDSARDAVRNLTEVVPQLLDQLRTVEQKR) are a coiled coil. Laminin G-like domains lie at 826–1030 (QVSM…SVPC), 1042–1222 (AASY…GYGC), and 1229–1397 (SRRA…LYEC). Cysteine 1000 and cysteine 1030 are oxidised to a cystine. N-linked (GlcNAc...) asparagine glycosylation occurs at asparagine 1088. The cysteines at positions 1196 and 1222 are disulfide-linked. 2 N-linked (GlcNAc...) asparagine glycosylation sites follow: asparagine 1283 and asparagine 1361. Cysteine 1365 and cysteine 1397 form a disulfide bridge. Positions 1409-1419 (KKGKNSSKPKT) are enriched in basic residues. The interval 1409 to 1433 (KKGKNSSKPKTNKQGEKSKDAPSWD) is disordered. Residues 1421 to 1430 (KQGEKSKDAP) are compositionally biased toward basic and acidic residues. Laminin G-like domains are found at residues 1462–1633 (AYQY…VTPC) and 1640–1813 (TGTY…INSC). 2 disulfides stabilise this stretch: cysteine 1610–cysteine 1633 and cysteine 1785–cysteine 1813.

As to quaternary structure, laminin is a complex glycoprotein, consisting of three different polypeptide chains (alpha, beta, gamma), which are bound to each other by disulfide bonds into a cross-shaped molecule comprising one long and three short arms with globules at each end. Alpha-4 is a subunit of laminin-8 (laminin-411), laminin-9 (laminin-421) and laminin-14 (laminin-423). In terms of tissue distribution, strongly expressed in peripheral nerves, cardiac muscle, fat, dermis, lung stroma, aortic endothelium, endocardium and endothelium of blood vessels in skin and brain.

The protein resides in the secreted. It localises to the extracellular space. Its subcellular location is the extracellular matrix. The protein localises to the basement membrane. Binding to cells via a high affinity receptor, laminin is thought to mediate the attachment, migration and organization of cells into tissues during embryonic development by interacting with other extracellular matrix components. The sequence is that of Laminin subunit alpha-4 (Lama4) from Mus musculus (Mouse).